The chain runs to 300 residues: F-box/LRR-repeat protein 15 (300 aa).

Methionine 1 carries the post-translational modification N-acetylmethionine. The region spanning 19-66 (LLDLPWEDVLLPHVLNWVPLRQLLRLQRVSRAFRALVQLHLARLRRFD) is the F-box domain. The interval 113–269 (NPQLRSVALA…EPSLSRLRKR (157 aa)) is interaction with SMURF1. LRR repeat units lie at residues 141-162 (RLQR…RGLA), 167-188 (ALEE…VYLA), 194-215 (GLRS…QELA), 220-241 (QLEH…RTLA), and 246-267 (ALRS…SRLR).

It belongs to the FBXL15 family. In terms of assembly, part of the SCF (SKP1-CUL1-F-box) E3 ubiquitin-protein ligase complex SCF(FBXL15) composed of CUL1, SKP1, RBX1 and FBXL15. Expressed in heart, liver, spleen, bone, muscle, brain and kidney (at protein level).

It is found in the cytoplasm. It functions in the pathway protein modification; protein ubiquitination. Functionally, substrate recognition component of a SCF (SKP1-CUL1-F-box protein) E3 ubiquitin-protein ligase complex which mediates the ubiquitination and subsequent proteasomal degradation of SMURF1, thereby acting as a positive regulator of the BMP signaling pathway. Required for dorsal/ventral pattern formation and bone mass maintenance. Also mediates ubiquitination of SMURF2 and WWP2. In Mus musculus (Mouse), this protein is F-box/LRR-repeat protein 15 (Fbxl15).